Consider the following 184-residue polypeptide: Ribosome maturation factor RimM (184 aa).

One can recognise a PRC barrel domain in the interval 112 to 184 (TDSYYWIDLI…SNKTISLDWQ (73 aa)).

This sequence belongs to the RimM family. Binds ribosomal protein uS19.

Its subcellular location is the cytoplasm. In terms of biological role, an accessory protein needed during the final step in the assembly of 30S ribosomal subunit, possibly for assembly of the head region. Essential for efficient processing of 16S rRNA. May be needed both before and after RbfA during the maturation of 16S rRNA. It has affinity for free ribosomal 30S subunits but not for 70S ribosomes. The protein is Ribosome maturation factor RimM of Polynucleobacter necessarius subsp. necessarius (strain STIR1).